A 1379-amino-acid polypeptide reads, in one-letter code: MSTDIATQLKGSRSDVEKVRKTVEAKFRELSGDGLPLRYEVNVLRHICLALKDNLHQNSDLYCDIMGIMLPRVVPCEEKPSLWEAHLSSLRYIHHGLFHQRSIEACQKLYNLIRQQPCRLQEESDYKIYLDIHLTHFNGFHVLLQKQKLPLEATSQLCYALESLGDLFAAMTQRQISLCATLLVQLNESLFGKRSRSFFKSLSFLPSESLAKMFNALLMLLASSTSSNLANLFPECLSLTLALVQIDMFSPQSNQQMSLQLLRMSKELFRQESNLCYALQLMYYYIKLIFVREPTGDFKRTYIDLSSKFQHFFEHKVASHAKEQWLADFLVAIQLLQVLIHQSNSKLQSPFQIFWQQFDGESSPEIYTAHFQLLQTCASLAVNITRSPLGCSCSHEACKSVRRHCILAYGLCALDAYINWKPAAEQRANVSPHKPLLGVVKYSMDVAKTMKCLGPTSVEIIKLVRQLTYVADQVTCPEQMSVLLPLLEPLQKLRPLVADQDMSSLLRRLFKASSHCGDSNIACRIQASYLASITNPARLRSQVCLYYHNLGKKGTEIKRCVYEWHESTPLPFPLTPDQKKQLYDTDFFALLHYLRSPSTAHMESLIRCRTSDYHLVLLARQMRKDDSISKKCIEVHDKLRQQRSLSRMDNLCLGHASVGLLLDALEAQKTKVSTKEITENMFEELLLSKNLWQMNIQREQRLVNYASEAISAFSNFFDRADQEPLSANETSIDWEALIDDAIATANALSSMGYQSEEDDAWLLLLRMGRLLEDRFTYLRALNHFLSQNEVSSRLNLKLGEEVEVAEELLDDLWPQLKNGKFFKRQQTTVMLCFCHLASYYARMECYSHAQLLLLHVEQLREEFPERQGKSDIVLLTLQTVRFRIGYQQRKPTNCRLPTPLRQLDILLDNVRSFCNLSSLDGGSLQLLLSTLVRESTECSANRLSERLSFSNIALHLVLQSGLALRAIEVFLAWLWTNLQMESFDKAQSKLRLIEHCLGIKQLNPTSRPEKEAIKDVAISDLASNMHLLQLVEPIRKQQLLNMASPNLLKMRPHSPNPQLDLDRYITLDVAPANLRENSQLQCLYFVTGCLHARLRFLQRNSEQLEEFYGRAHNWMQEKPPMSSALYPMLHAQQLYHLNYLRFARKHVEAISTAQLGLKMRSRAVDINFEYNFLAQLKTAQLELKPVGQDKPQVKILRRALVFNHSPEDKKRTATGSVSAVKNTASKVKQSAKKAPRFRIYEELELRPPSATSCSSSGGSGTENTPPSDHVDLNACQAIEISDDDDSPLVSTKKTQPKSREKAKPKATSKACKVLTLDNSLEIVETPTITTSTRSTRARLRQPVETPKTATLSSKRTRRQVLEAQAPETESISTRTRHRH.

Positions 1031-1037 are separase cleavage-site; the sequence is VEPIRKQ. Disordered stretches follow at residues 1206–1231, 1248–1309, and 1328–1379; these read PEDK…KQSA, PSAT…ATSK, and ITTS…RHRH. Residues 1213–1228 are compositionally biased toward polar residues; it reads ATGSVSAVKNTASKVK. A compositionally biased stretch (low complexity) spans 1248-1267; it reads PSATSCSSSGGSGTENTPPS.

In terms of assembly, interacts with pim and Sse. Cleavage of thr contributes to inactivation of Sse. Post-translationally, proteolytically cleaved after the metaphase-to-anaphase transition, C-terminal cleavage product is degraded. Cleavage can only proceed within complexes that contain active Sse. During embryogenesis, expressed in Malpighian tubule buds, and epithelia of foregut and hindgut.

Its subcellular location is the cytoplasm. Required specifically for chromosome disjunction during all mitoses; maternally provided protein is sufficient until mitosis 14 then zygotic protein is required. Involved in formation and/or maintenance of epithelial structures: bud extension during Malpighian tubule development, and foregut and hindgut morphogenesis. This is Protein three rows (thr) from Drosophila melanogaster (Fruit fly).